Reading from the N-terminus, the 330-residue chain is ATP-dependent (S)-NAD(P)H-hydrate dehydratase (330 aa).

In terms of domain architecture, YjeF C-terminal spans 36–327; the sequence is VIPLVRNTIP…QEINSAFKKL (292 aa). (6S)-NADPHX-binding positions include glycine 136 and 189-195; that span reads NFMEFTR. ATP contacts are provided by residues 229–233 and 248–257; these read KGEED and GSGRRCGGQG. Aspartate 258 contributes to the (6S)-NADPHX binding site.

This sequence belongs to the NnrD/CARKD family. Requires Mg(2+) as cofactor.

It carries out the reaction (6S)-NADHX + ATP = ADP + phosphate + NADH + H(+). The enzyme catalyses (6S)-NADPHX + ATP = ADP + phosphate + NADPH + H(+). In terms of biological role, catalyzes the dehydration of the S-form of NAD(P)HX at the expense of ATP, which is converted to ADP. Together with NAD(P)HX epimerase, which catalyzes the epimerization of the S- and R-forms, the enzyme allows the repair of both epimers of NAD(P)HX, a damaged form of NAD(P)H that is a result of enzymatic or heat-dependent hydration. This chain is ATP-dependent (S)-NAD(P)H-hydrate dehydratase, found in Danio rerio (Zebrafish).